The chain runs to 320 residues: HPr kinase/phosphorylase (320 aa).

Active-site residues include His141 and Lys162. 156–163 lines the ATP pocket; that stretch reads GHSGLGKS. Ser163 lines the Mg(2+) pocket. Asp180 (proton acceptor; for phosphorylation activity. Proton donor; for dephosphorylation activity) is an active-site residue. Residues 204–213 form an important for the catalytic mechanism of both phosphorylation and dephosphorylation region; the sequence is LEVRGLGILN. Glu205 lines the Mg(2+) pocket. Arg248 is an active-site residue. The segment at 269 to 274 is important for the catalytic mechanism of dephosphorylation; it reads PVAVGR.

Belongs to the HPrK/P family. In terms of assembly, homohexamer. Requires Mg(2+) as cofactor.

The enzyme catalyses [HPr protein]-L-serine + ATP = [HPr protein]-O-phospho-L-serine + ADP + H(+). It catalyses the reaction [HPr protein]-O-phospho-L-serine + phosphate + H(+) = [HPr protein]-L-serine + diphosphate. In terms of biological role, catalyzes the ATP- as well as the pyrophosphate-dependent phosphorylation of a specific serine residue in HPr, a phosphocarrier protein of the phosphoenolpyruvate-dependent sugar phosphotransferase system (PTS). HprK/P also catalyzes the pyrophosphate-producing, inorganic phosphate-dependent dephosphorylation (phosphorolysis) of seryl-phosphorylated HPr (P-Ser-HPr). This chain is HPr kinase/phosphorylase, found in Neisseria meningitidis serogroup B (strain ATCC BAA-335 / MC58).